The following is a 210-amino-acid chain: Meiotic coiled-coil protein 7 (210 aa).

A coiled-coil region spans residues 77 to 148 (KRSRESVLGS…LKTQLSNLNH (72 aa)).

It belongs to the MND1 family. As to quaternary structure, interacts with meu13.

It localises to the cytoplasm. It is found in the nucleus. In terms of biological role, required for meiotic recombination. The chain is Meiotic coiled-coil protein 7 (mcp7) from Schizosaccharomyces pombe (strain 972 / ATCC 24843) (Fission yeast).